The following is a 72-amino-acid chain: Beta-defensin 104 (72 aa).

An N-terminal signal peptide occupies residues 1–22 (MQRLVLLLAISLLLYQDLPVRS). 3 disulfide bridges follow: Cys-30–Cys-57, Cys-37–Cys-51, and Cys-41–Cys-58.

It belongs to the beta-defensin family. In terms of tissue distribution, high expression in the testis. Gastric antrum exhibited relatively high levels. A lower expression is observed in uterus and neutrophils thyroid gland, lung, and kidney. No detectable expression in other tissues tested.

It is found in the secreted. Has antimicrobial activity. Synergistic effects with lysozyme and DEFB103. This chain is Beta-defensin 104 (DEFB104A), found in Homo sapiens (Human).